A 252-amino-acid polypeptide reads, in one-letter code: Deoxyuridine 5'-triphosphate nucleotidohydrolase, mitochondrial (252 aa).

Residues 1–69 constitute a mitochondrion transit peptide; it reads MTPLCPRPAL…AGRLSQGCRG (69 aa). Cys11, Ser88, and Ser99 each carry phosphoserine. Residues 78–104 are disordered; that stretch reads WKGELPKAGGSPAPGPETPAISPSKRA. Residues 173-175, 187-193, Gly198, Arg241, and 246-247 contribute to the dUTP site; these read RSG, GVIDEDY, and FG.

The protein belongs to the dUTPase family. As to quaternary structure, homotrimer. Mg(2+) serves as cofactor. Post-translationally, nuclear isoform 2 is phosphorylated in vivo on Ser-11, a reaction that can be catalyzed in vitro by CDC2. Phosphorylation in mature T-cells occurs in a cell cycle-dependent manner. Isoform 3 is not phosphorylated. As to expression, found in a variety of tissues. Isoform 3 expression is constitutive, while isoform 2 expression correlates with the onset of DNA replication (at protein level). Isoform 2 degradation coincides with the cessation of nuclear DNA replication (at protein level).

The protein resides in the nucleus. It is found in the mitochondrion. The catalysed reaction is dUTP + H2O = dUMP + diphosphate + H(+). It functions in the pathway pyrimidine metabolism; dUMP biosynthesis; dUMP from dCTP (dUTP route): step 2/2. Its activity is regulated as follows. Phosphorylation is necessary for activity. Its function is as follows. Catalyzes the cleavage of 2'-deoxyuridine 5'-triphosphate (dUTP) into 2'-deoxyuridine 5'-monophosphate (dUMP) and inorganic pyrophosphate and through its action efficiently prevents uracil misincorporation into DNA and at the same time provides dUMP, the substrate for de novo thymidylate biosynthesis. Inhibits peroxisome proliferator-activated receptor (PPAR) activity by binding of its N-terminal to PPAR, preventing the latter's dimerization with retinoid X receptor. Essential for embryonic development. The protein is Deoxyuridine 5'-triphosphate nucleotidohydrolase, mitochondrial (DUT) of Homo sapiens (Human).